Consider the following 509-residue polypeptide: DEAD-box ATP-dependent RNA helicase CshA (509 aa).

The Q motif motif lies at 2–30; the sequence is QNFKELGISDKTVQTLEAMGFKEPTPIQK. Residues 33 to 203 form the Helicase ATP-binding domain; sequence IPYALEGDDI…QQFMKAPKII (171 aa). 46-53 lines the ATP pocket; that stretch reads AQTGTGKT. The DEAD box signature appears at 150 to 153; it reads DEAD. Positions 214–375 constitute a Helicase C-terminal domain; the sequence is QIDEYYTIVK…LRPPHRKEVL (162 aa). 2 stretches are compositionally biased toward basic residues: residues 440 to 459 and 467 to 482; these read ARKN…KRGN and RRSK…KKNQ. The tract at residues 440–509 is disordered; it reads ARKNRSSKGG…KGRTFADHQK (70 aa). Residues 483–492 are compositionally biased toward basic and acidic residues; sequence KKFDRRDKQQ.

This sequence belongs to the DEAD box helicase family. CshA subfamily. As to quaternary structure, oligomerizes, may be a member of the RNA degradosome.

The protein localises to the cytoplasm. The catalysed reaction is ATP + H2O = ADP + phosphate + H(+). In terms of biological role, DEAD-box RNA helicase possibly involved in RNA degradation. Unwinds dsRNA in both 5'- and 3'-directions, has RNA-dependent ATPase activity. In Staphylococcus epidermidis (strain ATCC 35984 / DSM 28319 / BCRC 17069 / CCUG 31568 / BM 3577 / RP62A), this protein is DEAD-box ATP-dependent RNA helicase CshA.